We begin with the raw amino-acid sequence, 178 residues long: Inorganic pyrophosphatase (178 aa).

Residues K30, R44, and Y56 each coordinate substrate. 3 residues coordinate Mg(2+): D66, D71, and D103. Substrate is bound at residue Y140.

This sequence belongs to the PPase family. In terms of assembly, homohexamer. The cofactor is Mg(2+).

It localises to the cytoplasm. The enzyme catalyses diphosphate + H2O = 2 phosphate + H(+). Its function is as follows. Catalyzes the hydrolysis of inorganic pyrophosphate (PPi) forming two phosphate ions. This Thermococcus kodakarensis (strain ATCC BAA-918 / JCM 12380 / KOD1) (Pyrococcus kodakaraensis (strain KOD1)) protein is Inorganic pyrophosphatase.